The sequence spans 164 residues: Phosphopantetheine adenylyltransferase (164 aa).

Residue S9 coordinates substrate. ATP contacts are provided by residues 9–10 (SF) and H17. The substrate site is built by K41, L73, and R87. Residues 88–90 (GLR), E98, and 123–129 (YTFLSSS) each bind ATP.

It belongs to the bacterial CoaD family. In terms of assembly, homohexamer. It depends on Mg(2+) as a cofactor.

Its subcellular location is the cytoplasm. It carries out the reaction (R)-4'-phosphopantetheine + ATP + H(+) = 3'-dephospho-CoA + diphosphate. It functions in the pathway cofactor biosynthesis; coenzyme A biosynthesis; CoA from (R)-pantothenate: step 4/5. Functionally, reversibly transfers an adenylyl group from ATP to 4'-phosphopantetheine, yielding dephospho-CoA (dPCoA) and pyrophosphate. This is Phosphopantetheine adenylyltransferase from Dictyoglomus thermophilum (strain ATCC 35947 / DSM 3960 / H-6-12).